The sequence spans 75 residues: Transaldolase (75 aa).

Belongs to the transaldolase family. Type 1 subfamily. As to quaternary structure, homodimer. Post-translationally, phosphorylated. Predominantly expressed in Y-organs.

Its subcellular location is the cytoplasm. It carries out the reaction D-sedoheptulose 7-phosphate + D-glyceraldehyde 3-phosphate = D-erythrose 4-phosphate + beta-D-fructose 6-phosphate. The protein operates within carbohydrate degradation; pentose phosphate pathway; D-glyceraldehyde 3-phosphate and beta-D-fructose 6-phosphate from D-ribose 5-phosphate and D-xylulose 5-phosphate (non-oxidative stage): step 2/3. Transaldolase is important for the balance of metabolites in the pentose-phosphate pathway. May play a role in the conversion of sterols into ecdysteroids via NADPH. In Carcinus maenas (Common shore crab), this protein is Transaldolase.